The primary structure comprises 412 residues: Serine hydroxymethyltransferase (412 aa).

(6S)-5,6,7,8-tetrahydrofolate-binding positions include Leu-117 and 121–123 (GHL). Lys-226 bears the N6-(pyridoxal phosphate)lysine mark.

This sequence belongs to the SHMT family. Homodimer. Pyridoxal 5'-phosphate serves as cofactor.

It is found in the cytoplasm. It catalyses the reaction (6R)-5,10-methylene-5,6,7,8-tetrahydrofolate + glycine + H2O = (6S)-5,6,7,8-tetrahydrofolate + L-serine. It participates in one-carbon metabolism; tetrahydrofolate interconversion. Its pathway is amino-acid biosynthesis; glycine biosynthesis; glycine from L-serine: step 1/1. Its function is as follows. Catalyzes the reversible interconversion of serine and glycine with tetrahydrofolate (THF) serving as the one-carbon carrier. This reaction serves as the major source of one-carbon groups required for the biosynthesis of purines, thymidylate, methionine, and other important biomolecules. Also exhibits THF-independent aldolase activity toward beta-hydroxyamino acids, producing glycine and aldehydes, via a retro-aldol mechanism. The chain is Serine hydroxymethyltransferase from Natranaerobius thermophilus (strain ATCC BAA-1301 / DSM 18059 / JW/NM-WN-LF).